The sequence spans 314 residues: Malate dehydrogenase (314 aa).

NAD(+) contacts are provided by residues glycine 11–glycine 16 and aspartate 35. Substrate-binding residues include arginine 84 and arginine 90. NAD(+) contacts are provided by residues asparagine 97 and isoleucine 120–asparagine 122. Substrate contacts are provided by asparagine 122 and arginine 153. Histidine 177 functions as the Proton acceptor in the catalytic mechanism.

The protein belongs to the LDH/MDH superfamily. MDH type 3 family.

It catalyses the reaction (S)-malate + NAD(+) = oxaloacetate + NADH + H(+). Its function is as follows. Catalyzes the reversible oxidation of malate to oxaloacetate. The chain is Malate dehydrogenase from Rickettsia prowazekii (strain Madrid E).